A 290-amino-acid polypeptide reads, in one-letter code: ATP synthase gamma chain (290 aa).

It belongs to the ATPase gamma chain family. In terms of assembly, F-type ATPases have 2 components, CF(1) - the catalytic core - and CF(0) - the membrane proton channel. CF(1) has five subunits: alpha(3), beta(3), gamma(1), delta(1), epsilon(1). CF(0) has three main subunits: a, b and c.

It is found in the cell inner membrane. Produces ATP from ADP in the presence of a proton gradient across the membrane. The gamma chain is believed to be important in regulating ATPase activity and the flow of protons through the CF(0) complex. The polypeptide is ATP synthase gamma chain (Bacteroides fragilis (strain ATCC 25285 / DSM 2151 / CCUG 4856 / JCM 11019 / LMG 10263 / NCTC 9343 / Onslow / VPI 2553 / EN-2)).